Consider the following 72-residue polypeptide: Translation initiation factor IF-1 (72 aa).

The S1-like domain maps to 1–72 (MAKEEVLEFP…TKGRITYRFK (72 aa)).

Belongs to the IF-1 family. In terms of assembly, component of the 30S ribosomal translation pre-initiation complex which assembles on the 30S ribosome in the order IF-2 and IF-3, IF-1 and N-formylmethionyl-tRNA(fMet); mRNA recruitment can occur at any time during PIC assembly.

Its subcellular location is the cytoplasm. In terms of biological role, one of the essential components for the initiation of protein synthesis. Stabilizes the binding of IF-2 and IF-3 on the 30S subunit to which N-formylmethionyl-tRNA(fMet) subsequently binds. Helps modulate mRNA selection, yielding the 30S pre-initiation complex (PIC). Upon addition of the 50S ribosomal subunit IF-1, IF-2 and IF-3 are released leaving the mature 70S translation initiation complex. The protein is Translation initiation factor IF-1 of Sinorhizobium medicae (strain WSM419) (Ensifer medicae).